Reading from the N-terminus, the 459-residue chain is Elongation factor 1-alpha 2 (459 aa).

In terms of domain architecture, tr-type G spans 5 to 242; the sequence is KTHINIVVIG…DCIIPPQRPT (238 aa). The tract at residues 14-21 is G1; it reads GHVDSGKS. The G2 stretch occupies residues 70-74; sequence GITID. Positions 91–94 are G3; that stretch reads DAPG. The segment at 153–156 is G4; the sequence is NKMD. The tract at residues 194–196 is G5; it reads SGF. 5-glutamyl glycerylphosphorylethanolamine occurs at positions 301 and 374.

This sequence belongs to the TRAFAC class translation factor GTPase superfamily. Classic translation factor GTPase family. EF-Tu/EF-1A subfamily.

The protein localises to the cytoplasm. Its function is as follows. This protein promotes the GTP-dependent binding of aminoacyl-tRNA to the A-site of ribosomes during protein biosynthesis. In Oscheius tipulae, this protein is Elongation factor 1-alpha 2 (eft-2).